The chain runs to 172 residues: Iron-sulfur cluster assembly protein SufA (172 aa).

The signal sequence occupies residues 1–19 (MFINIFLFLFAATINISSS). [4Fe-4S] cluster-binding residues include Cys96, Cys164, and Cys166.

It belongs to the HesB/IscA family. As to quaternary structure, homodimer.

Its subcellular location is the plastid. The protein localises to the apicoplast. It participates in cofactor biosynthesis; iron-sulfur cluster biosynthesis. Its function is as follows. Participates in the sulfur mobilization (SUF) pathway for iron-sulfur (Fe-S) cluster biogenesis. Involved in the pre-assembly of [4Fe-4S] clusters and their transfer to target proteins. The sequence is that of Iron-sulfur cluster assembly protein SufA from Plasmodium berghei (strain Anka).